The sequence spans 337 residues: Gastrula zinc finger protein XlCGF26.1 (337 aa).

12 C2H2-type zinc fingers span residues 6-28, 34-56, 62-84, 90-112, 118-140, 146-168, 174-196, 202-224, 230-252, 258-280, 286-309, and 315-337; these read FDCT…YKIH, FICA…SKIH, FPCT…NKIH, FTCT…VKIH, FTCT…NKIH, FTCT…FKIH, and FSCT…KRTH.

The protein belongs to the krueppel C2H2-type zinc-finger protein family.

The protein localises to the nucleus. In terms of biological role, may be involved in transcriptional regulation. The sequence is that of Gastrula zinc finger protein XlCGF26.1 from Xenopus laevis (African clawed frog).